The primary structure comprises 359 residues: Homoserine O-acetyltransferase (359 aa).

The AB hydrolase-1 domain occupies 49–332 (VLICHALTGS…QSSYGHDAFL (284 aa)). Residue S143 is the Nucleophile of the active site. R212 is a binding site for substrate. Residues D299 and H328 contribute to the active site. D329 lines the substrate pocket.

This sequence belongs to the AB hydrolase superfamily. MetX family. Homodimer.

The protein resides in the cytoplasm. It carries out the reaction L-homoserine + acetyl-CoA = O-acetyl-L-homoserine + CoA. It functions in the pathway amino-acid biosynthesis; L-methionine biosynthesis via de novo pathway; O-acetyl-L-homoserine from L-homoserine: step 1/1. Transfers an acetyl group from acetyl-CoA to L-homoserine, forming acetyl-L-homoserine. This chain is Homoserine O-acetyltransferase, found in Trichormus variabilis (strain ATCC 29413 / PCC 7937) (Anabaena variabilis).